Consider the following 294-residue polypeptide: Elongation factor Ts (294 aa).

The involved in Mg(2+) ion dislocation from EF-Tu stretch occupies residues 80 to 83 (TDFV).

It belongs to the EF-Ts family.

The protein localises to the cytoplasm. In terms of biological role, associates with the EF-Tu.GDP complex and induces the exchange of GDP to GTP. It remains bound to the aminoacyl-tRNA.EF-Tu.GTP complex up to the GTP hydrolysis stage on the ribosome. The chain is Elongation factor Ts from Polynucleobacter asymbioticus (strain DSM 18221 / CIP 109841 / QLW-P1DMWA-1) (Polynucleobacter necessarius subsp. asymbioticus).